A 124-amino-acid polypeptide reads, in one-letter code: Small ribosomal subunit protein uS12 (124 aa).

The residue at position 89 (D89) is a 3-methylthioaspartic acid.

Belongs to the universal ribosomal protein uS12 family. In terms of assembly, part of the 30S ribosomal subunit. Contacts proteins S8 and S17. May interact with IF1 in the 30S initiation complex.

Functionally, with S4 and S5 plays an important role in translational accuracy. Interacts with and stabilizes bases of the 16S rRNA that are involved in tRNA selection in the A site and with the mRNA backbone. Located at the interface of the 30S and 50S subunits, it traverses the body of the 30S subunit contacting proteins on the other side and probably holding the rRNA structure together. The combined cluster of proteins S8, S12 and S17 appears to hold together the shoulder and platform of the 30S subunit. In Buchnera aphidicola subsp. Cinara cedri (strain Cc), this protein is Small ribosomal subunit protein uS12.